The chain runs to 189 residues: Elongation factor P (189 aa).

It belongs to the elongation factor P family.

It is found in the cytoplasm. It participates in protein biosynthesis; polypeptide chain elongation. Involved in peptide bond synthesis. Stimulates efficient translation and peptide-bond synthesis on native or reconstituted 70S ribosomes in vitro. Probably functions indirectly by altering the affinity of the ribosome for aminoacyl-tRNA, thus increasing their reactivity as acceptors for peptidyl transferase. In Pseudomonas putida (strain GB-1), this protein is Elongation factor P.